Here is a 344-residue protein sequence, read N- to C-terminus: Dihydroorotate dehydrogenase (quinone) (344 aa).

FMN-binding positions include 61 to 65 (AGLDK) and T85. K65 is a binding site for substrate. Position 110–114 (110–114 (NRMGF)) interacts with substrate. FMN is bound by residues N138 and N171. N171 contributes to the substrate binding site. S174 acts as the Nucleophile in catalysis. A substrate-binding site is contributed by N176. K216 and T244 together coordinate FMN. Position 245-246 (245-246 (NT)) interacts with substrate. FMN contacts are provided by residues G267, G296, and 317–318 (YS).

This sequence belongs to the dihydroorotate dehydrogenase family. Type 2 subfamily. In terms of assembly, monomer. FMN is required as a cofactor.

The protein resides in the cell membrane. It catalyses the reaction (S)-dihydroorotate + a quinone = orotate + a quinol. The protein operates within pyrimidine metabolism; UMP biosynthesis via de novo pathway; orotate from (S)-dihydroorotate (quinone route): step 1/1. Functionally, catalyzes the conversion of dihydroorotate to orotate with quinone as electron acceptor. The polypeptide is Dihydroorotate dehydrogenase (quinone) (Psychrobacter arcticus (strain DSM 17307 / VKM B-2377 / 273-4)).